A 137-amino-acid chain; its full sequence is Ribosome-binding factor A (137 aa).

Positions 114-137 are disordered; the sequence is QLIDEARAEDRELRPEDDETGNNE. Basic and acidic residues predominate over residues 117–127; the sequence is DEARAEDRELR. Residues 128 to 137 are compositionally biased toward acidic residues; the sequence is PEDDETGNNE.

Belongs to the RbfA family. In terms of assembly, monomer. Binds 30S ribosomal subunits, but not 50S ribosomal subunits or 70S ribosomes.

The protein resides in the cytoplasm. Its function is as follows. One of several proteins that assist in the late maturation steps of the functional core of the 30S ribosomal subunit. Associates with free 30S ribosomal subunits (but not with 30S subunits that are part of 70S ribosomes or polysomes). Required for efficient processing of 16S rRNA. May interact with the 5'-terminal helix region of 16S rRNA. The protein is Ribosome-binding factor A of Alcanivorax borkumensis (strain ATCC 700651 / DSM 11573 / NCIMB 13689 / SK2).